Reading from the N-terminus, the 360-residue chain is Xanthohumol 4-O-methyltransferase (360 aa).

Aspartate 227 is an S-adenosyl-L-methionine binding site. Histidine 266 acts as the Proton acceptor in catalysis.

The protein belongs to the class I-like SAM-binding methyltransferase superfamily. Cation-independent O-methyltransferase family. As to quaternary structure, homodimer. In terms of tissue distribution, highly expressed in lupulin glands. Detected in cones, male flowers and roots.

It localises to the cytoplasm. It catalyses the reaction xanthohumol + S-adenosyl-L-methionine = 4-O-methylxanthohumol + S-adenosyl-L-homocysteine + H(+). The catalysed reaction is desmethylxanthohumol + S-adenosyl-L-methionine = xanthohumol + S-adenosyl-L-homocysteine + H(+). The enzyme catalyses isoliquiritigenin + S-adenosyl-L-methionine = 2'-O-methylisoliquiritigenin + S-adenosyl-L-homocysteine + H(+). It carries out the reaction trans-resveratrol + S-adenosyl-L-methionine = 3-methoxy-4',5-dihydroxy-trans-stilbene + S-adenosyl-L-homocysteine + H(+). It functions in the pathway secondary metabolite biosynthesis. With respect to regulation, inhibited by S-adenosyl homocysteine. In terms of biological role, involved in the biosynthesis of prenylated phenolics natural products which contribute to the bitter taste of beer and display broad biological activities. O-methyltransferase with a low substrate selectivity. Methylates chalconaringenin, desmethylxanthohumol, xanthohumol, isoliquiritigenin, butein, 2',4-dihydroxychalcone, resveratrol, genistein and guaiacol. Catalyzes the biosynthesis of 2',4'-dihydroxy-4,6'-dimethoxy-3'-prenylchalcone (4-O-methylxanthohumol). This Humulus lupulus (European hop) protein is Xanthohumol 4-O-methyltransferase.